Reading from the N-terminus, the 190-residue chain is Peptidyl-prolyl cis-trans isomerase FKBP20-1 (190 aa).

G2 carries the post-translational modification N-acetylglycine. The PPIase FKBP-type domain occupies 32 to 121 (LPVVDVHYEG…IFEVELVACR (90 aa)). Basic and acidic residues predominate over residues 149 to 163 (AAAKEDDKKKREEAK). The interval 149-190 (AAAKEDDKKKREEAKAAAAARIQAKLDAKKGPGKGKGKGKAK) is disordered. Over residues 179-190 (GPGKGKGKGKAK) the composition is skewed to basic residues.

Belongs to the FKBP-type PPIase family.

The enzyme catalyses [protein]-peptidylproline (omega=180) = [protein]-peptidylproline (omega=0). In terms of biological role, PPIases accelerate the folding of proteins. It catalyzes the cis-trans isomerization of proline imidic peptide bonds in oligopeptides. This Arabidopsis thaliana (Mouse-ear cress) protein is Peptidyl-prolyl cis-trans isomerase FKBP20-1 (FKBP20-1).